The sequence spans 370 residues: Binary larvicide subunit BinA (370 aa).

Residues 1 to 6 (MRNLDF) constitute a propeptide that is removed on maturation. The tract at residues 1 to 155 (MRNLDFIDSF…LISNKEQIYL (155 aa)) is beta-trefoil domain. Cys31 and Cys47 are oxidised to a cystine. The tract at residues 156 to 370 (TLPSLPENEQ…NTKIITDDQN (215 aa)) is pore-forming domain.

Belongs to the toxin_10 family. As to quaternary structure, forms a heterodimer with BinB. Processed by proteases in the mosquito gut, probably at both the N- and C-termini.

It is found in the spore. It localises to the perispore. Functionally, component of a binary toxin active against Culex and some Aedes mosquito larvae. The individual subunits are not toxic. BinAB binds to the gastric caecum and posterior midgut of C.quinquefasciatus larvae; this subunit alone binds the entire larval gut. Binary toxin internalization into host gut cells requires both proteins. Toxic to Aedes atropalpus mosquito larvae; mortality towards both C.quinquefasciatus and A.atropalpus is maximal by 48 hours. A.aegypti is not very susceptible to this toxin. The polypeptide is Binary larvicide subunit BinA (binA) (Lysinibacillus sphaericus (Bacillus sphaericus)).